Reading from the N-terminus, the 130-residue chain is Large ribosomal subunit protein bL19 (130 aa).

This sequence belongs to the bacterial ribosomal protein bL19 family.

Functionally, this protein is located at the 30S-50S ribosomal subunit interface and may play a role in the structure and function of the aminoacyl-tRNA binding site. This is Large ribosomal subunit protein bL19 from Psychrobacter arcticus (strain DSM 17307 / VKM B-2377 / 273-4).